Here is a 122-residue protein sequence, read N- to C-terminus: Fluoride-specific ion channel FluC (122 aa).

The next 4 helical transmembrane spans lie at 1–21, 35–55, 67–87, and 98–118; these read MYAFFTIFIGGGLGAVSRHYL, WAILLINLLGCLGIGFFSAYL, FLLTGFLGGFTTYSTFTLNLI, and FLNLFLHLGGGILCCFVGFWL. The Na(+) site is built by glycine 74 and threonine 77.

It belongs to the fluoride channel Fluc/FEX (TC 1.A.43) family.

It is found in the cell inner membrane. It carries out the reaction fluoride(in) = fluoride(out). With respect to regulation, na(+) is not transported, but it plays an essential structural role and its presence is essential for fluoride channel function. Functionally, fluoride-specific ion channel. Important for reducing fluoride concentration in the cell, thus reducing its toxicity. The protein is Fluoride-specific ion channel FluC of Dichelobacter nodosus (strain VCS1703A).